The primary structure comprises 226 residues: MVEIRLSSGKILNKKVHKIGVIALGSFLENHGAVLPIDTDIKIASYIALNASILTGAKFLGVVIPSTEYEYVKHGIHNKVDEILDYLRFMINWGKKIGVEEIIIVNCHGGNVLIEEHLKNLEKELDVSIEMINITFTHASTEEVSVGEVIGISDVKRLEEHTNFEKYPEVGMVGLKEARRNNPIIDQEAKEVETSGVKVDRELGRSILKNAIEKVVKKIEEKIAKK.

The Fe cation site is built by E29, H31, D40, and H108.

This sequence belongs to the creatininase superfamily. FAPy deformylase family. As to quaternary structure, homodimer. It depends on Fe(2+) as a cofactor. The cofactor is Zn(2+).

It carries out the reaction 2-amino-5-formylamino-6-(5-phospho-D-ribosylamino)pyrimidin-4(3H)-one + H2O = 2,5-diamino-6-(1-D-ribosylamino)pyrimidin-4(3H)-one 5'-phosphate + formate + H(+). The protein operates within cofactor biosynthesis; coenzyme F420 biosynthesis. Its pathway is cofactor biosynthesis; riboflavin biosynthesis. Its function is as follows. Catalyzes the hydrolysis of the formamide of 2-amino-5-formylamino-6-ribosylamino-4(3H)-pyrimidinone 5'-monophosphate (FAPy) to form 2,5-diamino-6-ribosylamino-4(3H)-pyrimidinone 5'-phosphate (APy). The polypeptide is 2-amino-5-formylamino-6-ribosylaminopyrimidin-4(3H)-one 5'-monophosphate deformylase (Methanocaldococcus vulcanius (strain ATCC 700851 / DSM 12094 / M7) (Methanococcus vulcanius)).